The chain runs to 310 residues: DDRGK domain-containing protein 1 (310 aa).

A helical membrane pass occupies residues 1–21 (MAAIIYLAIAAVASILLFVAV). Over 22–310 (KLLSTDTKTE…DSPAEISVNA (289 aa)) the chain is Cytoplasmic. 2 disordered regions span residues 38-85 (VGEL…DEYQ) and 110-162 (KAEK…LKEE). The span at 52-70 (PRARARRGLRNKTNRSKTQ) shows a compositional bias: basic residues. Positions 76–85 (DYDDYDDEYQ) are enriched in acidic residues.

It belongs to the DDRGK1 family.

It is found in the endoplasmic reticulum membrane. In terms of biological role, substrate adapter for ufmylation, the covalent attachment of the ubiquitin-like modifier UFM1 to substrate proteins. This chain is DDRGK domain-containing protein 1, found in Trichoplax adhaerens (Trichoplax reptans).